The chain runs to 172 residues: Small ribosomal subunit protein uS5 (172 aa).

The region spanning 17–80 (LREKMISVNR…EQARRNMFKV (64 aa)) is the S5 DRBM domain.

Belongs to the universal ribosomal protein uS5 family. In terms of assembly, part of the 30S ribosomal subunit. Contacts proteins S4 and S8.

With S4 and S12 plays an important role in translational accuracy. In terms of biological role, located at the back of the 30S subunit body where it stabilizes the conformation of the head with respect to the body. The polypeptide is Small ribosomal subunit protein uS5 (Burkholderia orbicola (strain AU 1054)).